The sequence spans 168 residues: Thermonuclease (168 aa).

An N-terminal signal peptide occupies residues 1 to 27 (MKKITTGVLILAIAIVVLIFQYINGDG). Active-site residues include R64, E72, and R114.

It belongs to the thermonuclease family. The cofactor is Ca(2+).

The protein localises to the secreted. The catalysed reaction is Endonucleolytic cleavage to nucleoside 3'-phosphates and 3'-phosphooligonucleotide end-products.. Enzyme that catalyzes the hydrolysis of both DNA and RNA at the 5'-position of the phosphodiester bond. In Staphylococcus intermedius, this protein is Thermonuclease (nucI).